We begin with the raw amino-acid sequence, 698 residues long: Na(+)/H(+) antiporter NhaS5 (698 aa).

Transmembrane regions (helical) follow at residues 10–30 (SNPL…PPIF), 35–55 (LPGL…GLGV), 65–85 (LFTD…IDMV), 100–120 (LTFA…GYSF), 121–141 (NASV…YPIV), 156–176 (IGAT…CISI), 184–204 (AGLV…LIGF), 222–242 (QFLF…LINV), 275–295 (LFIP…AFLV), 300–320 (LFPL…VAAI), 333–353 (GLTM…AAVA), and 370–390 (VLNT…LMTA).

The protein belongs to the monovalent cation:proton antiporter 2 (CPA2) transporter (TC 2.A.37) family.

The protein resides in the membrane. Its function is as follows. Na(+)/H(+) antiporter. The sequence is that of Na(+)/H(+) antiporter NhaS5 (nhaS5) from Synechocystis sp. (strain ATCC 27184 / PCC 6803 / Kazusa).